The following is a 396-amino-acid chain: Aspartate aminotransferase (396 aa).

Residues glycine 34, tryptophan 130, and asparagine 183 each contribute to the L-aspartate site. At lysine 246 the chain carries N6-(pyridoxal phosphate)lysine. Residue arginine 374 coordinates L-aspartate.

Belongs to the class-I pyridoxal-phosphate-dependent aminotransferase family. As to quaternary structure, homodimer. Pyridoxal 5'-phosphate is required as a cofactor.

The protein localises to the cytoplasm. The catalysed reaction is L-aspartate + 2-oxoglutarate = oxaloacetate + L-glutamate. In Salmonella typhi, this protein is Aspartate aminotransferase (aspC).